Reading from the N-terminus, the 1123-residue chain is Phytochrome A (1123 aa).

A compositionally biased stretch (low complexity) spans 1-14; the sequence is MSSSRPSQSSTTSS. The segment at 1–20 is disordered; it reads MSSSRPSQSSTTSSRSKHSA. The GAF domain occupies 218–401; sequence SMERLCDTMV…VFAILVNKEL (184 aa). Cys323 is a phytochromobilin binding site. The 71-residue stretch at 617-687 folds into the PAS 1 domain; the sequence is VTAEMVRLIE…KMLELALQGQ (71 aa). The PAC domain maps to 690-746; sequence RNVEFEIKTHGPSRDSSPISLIVNACASKDVRDSVVGVCFIAQDITGQKSIMDKFTR. Residues 747–821 form the PAS 2 domain; that stretch reads IEGDYRAIIQ…KNQEAFVNFG (75 aa). Residues 901 to 1118 enclose the Histidine kinase domain; it reads YIRRQIRNPL…TFIISVELAV (218 aa).

It belongs to the phytochrome family. As to quaternary structure, homodimer. In terms of processing, contains one covalently linked phytochromobilin chromophore.

Regulatory photoreceptor which exists in two forms that are reversibly interconvertible by light: the Pr form that absorbs maximally in the red region of the spectrum and the Pfr form that absorbs maximally in the far-red region. Photoconversion of Pr to Pfr induces an array of morphogenic responses, whereas reconversion of Pfr to Pr cancels the induction of those responses. Pfr controls the expression of a number of nuclear genes including those encoding the small subunit of ribulose-bisphosphate carboxylase, chlorophyll A/B binding protein, protochlorophyllide reductase, rRNA, etc. It also controls the expression of its own gene(s) in a negative feedback fashion. This is Phytochrome A (PHYA) from Solanum tuberosum (Potato).